A 403-amino-acid polypeptide reads, in one-letter code: Betaine--homocysteine S-methyltransferase 1 (403 aa).

The 304-residue stretch at 8-311 folds into the Hcy-binding domain; sequence KGLLERLDAG…YHTRAIAEEL (304 aa). Positions 214, 296, and 297 each coordinate Zn(2+).

In terms of assembly, homotetramer. The cofactor is Zn(2+).

The protein localises to the cytoplasm. It carries out the reaction L-homocysteine + glycine betaine = N,N-dimethylglycine + L-methionine. The protein operates within amine and polyamine degradation; betaine degradation; sarcosine from betaine: step 1/2. It functions in the pathway amino-acid biosynthesis; L-methionine biosynthesis via de novo pathway; L-methionine from L-homocysteine (BhmT route): step 1/1. Its function is as follows. Involved in the regulation of homocysteine metabolism. Converts betaine and homocysteine to dimethylglycine and methionine, respectively. This reaction is also required for the irreversible oxidation of choline. The polypeptide is Betaine--homocysteine S-methyltransferase 1 (bhmt) (Xenopus tropicalis (Western clawed frog)).